We begin with the raw amino-acid sequence, 355 residues long: uncharacterized protein (355 aa).

132–139 provides a ligand contact to ATP; that stretch reads GPPGCGKT.

Belongs to the AAA ATPase family.

Its subcellular location is the mitochondrion. This is an uncharacterized protein from Schizosaccharomyces pombe (strain 972 / ATCC 24843) (Fission yeast).